The primary structure comprises 40 residues: MADTTGRIPLWLISTVTGTLVIGLMGIFFYGSYSGLGSSL.

Residues 8–28 traverse the membrane as a helical segment; sequence IPLWLISTVTGTLVIGLMGIF.

The protein belongs to the PsbJ family. As to quaternary structure, PSII is composed of 1 copy each of membrane proteins PsbA, PsbB, PsbC, PsbD, PsbE, PsbF, PsbH, PsbI, PsbJ, PsbK, PsbL, PsbM, PsbT, PsbX, PsbY, PsbZ, Psb30/Ycf12, at least 3 peripheral proteins of the oxygen-evolving complex and a large number of cofactors. It forms dimeric complexes.

The protein resides in the plastid. The protein localises to the chloroplast thylakoid membrane. Functionally, one of the components of the core complex of photosystem II (PSII). PSII is a light-driven water:plastoquinone oxidoreductase that uses light energy to abstract electrons from H(2)O, generating O(2) and a proton gradient subsequently used for ATP formation. It consists of a core antenna complex that captures photons, and an electron transfer chain that converts photonic excitation into a charge separation. The protein is Photosystem II reaction center protein J of Ginkgo biloba (Ginkgo).